Reading from the N-terminus, the 43-residue chain is MEAALLVEKNLNQALLDLHGLASARGDPHICDFLENHFLDEEV.

Residues 1 to 43 (MEAALLVEKNLNQALLDLHGLASARGDPHICDFLENHFLDEEV) enclose the Ferritin-like diiron domain.

Belongs to the ferritin family. Oligomer of 24 subunits. There are two types of subunits: L (light) chain and H (heavy) chain. The major chain can be light or heavy, depending on the species and tissue type. The functional molecule forms a roughly spherical shell with a diameter of 12 nm and contains a central cavity into which the insoluble mineral iron core is deposited. Interacts with NCOA4.

Its subcellular location is the cytoplasmic vesicle. It is found in the autophagosome. The protein resides in the cytoplasm. The protein localises to the autolysosome. In terms of biological role, stores iron in a soluble, non-toxic, readily available form. Important for iron homeostasis. Iron is taken up in the ferrous form and deposited as ferric hydroxides after oxidation. Also plays a role in delivery of iron to cells. Mediates iron uptake in capsule cells of the developing kidney. Delivery to lysosomes by the cargo receptor NCOA4 for autophagic degradation and release or iron. The chain is Ferritin light chain (FTL) from Ovis aries (Sheep).